Reading from the N-terminus, the 215-residue chain is Sodium channel regulatory subunit beta-3 (215 aa).

A signal peptide spans 1–22; the sequence is MPAFNRLFPLASLVLIYWVSVC. Topologically, residues 23-156 are extracellular; the sequence is FPVCVEVPSE…EEAGEDFTSV (134 aa). Intrachain disulfides connect Cys26–Cys48 and Cys45–Cys120. One can recognise an Ig-like C2-type domain in the interval 32–154; the sequence is ETEAVQGNPM…VTEEAGEDFT (123 aa). Asn95, Asn109, Asn113, and Asn121 each carry an N-linked (GlcNAc...) asparagine glycan. A helical transmembrane segment spans residues 157-178; sequence VSEIMMYILLVFLTLWLLIEMI. Residues 179 to 215 are Cytoplasmic-facing; it reads YCYRKVSKAEEAAQENASDYLAIPSENKENSAVPVEE.

Belongs to the sodium channel auxiliary subunit SCN3B (TC 8.A.17) family. A voltage-gated sodium (Nav) channel consists of an ion-conducting pore-forming alpha subunit functional on its own that is regulated by one or more beta subunits. Forms homodimers and homotrimers. SCN3B is non-covalently associated with alpha subunits and induces the formation of alpha subunit oligomers, including trimers. Interacts with SCN5A/Nav1.5; regulatory subunit of SCN5A/Nav1.5. Interacts with SCN7A/Nav2.1; probable regulatory subunit of SCN7A/Nav2.1. Interacts with SCN10A; regulatory subunit of SCN10A/Nav1.8. Interacts with NFASC; probably involved in targeting the sodium channels to the nodes of Ranvier. In terms of processing, intramolecular disulfide bonds favor the voltage-gated sodium channel oligomeric complex assembly. N-glycosylated. As to expression, expressed in the atrium.

It is found in the cell membrane. Functionally, regulatory subunit of multiple voltage-gated sodium (Nav) channels directly mediating the depolarization of excitable membranes. Navs, also called VGSCs (voltage-gated sodium channels) or VDSCs (voltage-dependent sodium channels), operate by switching between closed and open conformations depending on the voltage difference across the membrane. In the open conformation they allow Na(+) ions to selectively pass through the pore, along their electrochemical gradient. The influx of Na+ ions provokes membrane depolarization, initiating the propagation of electrical signals throughout cells and tissues. The accessory beta subunits participate in localization and functional modulation of the Nav channels. Modulates the activity of SCN2A/Nav1.2, causing a hyperpolarizing shift in the voltage-dependence of inactivation of the channel and increasing the fraction of channels operating in the fast gating mode. Modulates the activity of SCN5A/Nav1.5. Could also regulate the atypical sodium channel SCN7A/Nav2.1. Modulates the activity of SCN10A/Nav1.8, regulating its oligomerization and accelerating the recovery from inactivation. This chain is Sodium channel regulatory subunit beta-3, found in Homo sapiens (Human).